The following is a 127-amino-acid chain: Aspartate 1-decarboxylase (127 aa).

Residue S25 is the Schiff-base intermediate with substrate; via pyruvic acid of the active site. Residue S25 is modified to Pyruvic acid (Ser). A substrate-binding site is contributed by T57. The active-site Proton donor is Y58. Substrate is bound at residue 73–75 (GAA).

The protein belongs to the PanD family. As to quaternary structure, heterooctamer of four alpha and four beta subunits. Pyruvate is required as a cofactor. Is synthesized initially as an inactive proenzyme, which is activated by self-cleavage at a specific serine bond to produce a beta-subunit with a hydroxyl group at its C-terminus and an alpha-subunit with a pyruvoyl group at its N-terminus.

It is found in the cytoplasm. The enzyme catalyses L-aspartate + H(+) = beta-alanine + CO2. It participates in cofactor biosynthesis; (R)-pantothenate biosynthesis; beta-alanine from L-aspartate: step 1/1. Functionally, catalyzes the pyruvoyl-dependent decarboxylation of aspartate to produce beta-alanine. The protein is Aspartate 1-decarboxylase of Staphylococcus carnosus (strain TM300).